Here is a 252-residue protein sequence, read N- to C-terminus: MLAKRIIPCLDVNKGRVVKGVNFVNLVDAGDPVEAAKAYDEAGADELVFLDITASAEERDIILDVVKQTAETVFMPLTVGGGVRSLEDVRKLLESGADKVSINTAAVKNPSLVESAAVRFGSSTIVVAIDAKRTGKDRWEVYINGGRTATGIDAVEWAKAVEDLGAGEILLTSMDRDGTKNGYDIALTRAISEAVSIPVIASGGAGKKEDFYDAFTEGKADAALAASLFHFKELTIGELKEFLKEKGIPVRL.

Active-site residues include Asp11 and Asp130.

The protein belongs to the HisA/HisF family. As to quaternary structure, heterodimer of HisH and HisF.

The protein resides in the cytoplasm. It carries out the reaction 5-[(5-phospho-1-deoxy-D-ribulos-1-ylimino)methylamino]-1-(5-phospho-beta-D-ribosyl)imidazole-4-carboxamide + L-glutamine = D-erythro-1-(imidazol-4-yl)glycerol 3-phosphate + 5-amino-1-(5-phospho-beta-D-ribosyl)imidazole-4-carboxamide + L-glutamate + H(+). It functions in the pathway amino-acid biosynthesis; L-histidine biosynthesis; L-histidine from 5-phospho-alpha-D-ribose 1-diphosphate: step 5/9. Its function is as follows. IGPS catalyzes the conversion of PRFAR and glutamine to IGP, AICAR and glutamate. The HisF subunit catalyzes the cyclization activity that produces IGP and AICAR from PRFAR using the ammonia provided by the HisH subunit. The chain is Imidazole glycerol phosphate synthase subunit HisF from Persephonella marina (strain DSM 14350 / EX-H1).